A 243-amino-acid polypeptide reads, in one-letter code: ATP-dependent dethiobiotin synthetase BioD (243 aa).

12 to 17 (DVGKTF) lines the ATP pocket. T16 lines the Mg(2+) pocket. The active site involves K37. Position 41 (S41) interacts with substrate. ATP contacts are provided by residues D54, 115–118 (EGCG), and 179–180 (NM). Residues D54 and E115 each coordinate Mg(2+).

This sequence belongs to the dethiobiotin synthetase family. As to quaternary structure, homodimer. The cofactor is Mg(2+).

The protein localises to the cytoplasm. It catalyses the reaction (7R,8S)-7,8-diammoniononanoate + CO2 + ATP = (4R,5S)-dethiobiotin + ADP + phosphate + 3 H(+). The protein operates within cofactor biosynthesis; biotin biosynthesis; biotin from 7,8-diaminononanoate: step 1/2. Its function is as follows. Catalyzes a mechanistically unusual reaction, the ATP-dependent insertion of CO2 between the N7 and N8 nitrogen atoms of 7,8-diaminopelargonic acid (DAPA, also called 7,8-diammoniononanoate) to form a ureido ring. The polypeptide is ATP-dependent dethiobiotin synthetase BioD (Caldicellulosiruptor bescii (strain ATCC BAA-1888 / DSM 6725 / KCTC 15123 / Z-1320) (Anaerocellum thermophilum)).